The chain runs to 44 residues: Photosystem I reaction center subunit IX (44 aa).

A helical membrane pass occupies residues 7 to 27 (YLSVAPVLTTLWFGSLAGLLI).

It belongs to the PsaJ family.

It is found in the plastid. The protein resides in the chloroplast thylakoid membrane. May help in the organization of the PsaE and PsaF subunits. The protein is Photosystem I reaction center subunit IX of Nymphaea alba (White water-lily).